A 324-amino-acid chain; its full sequence is Beta-ketoacyl-[acyl-carrier-protein] synthase III (324 aa).

Residues Cys-112 and His-251 contribute to the active site. The interval 252 to 256 (QANLR) is ACP-binding. The active site involves Asn-281.

It belongs to the thiolase-like superfamily. FabH family. In terms of assembly, homodimer.

Its subcellular location is the cytoplasm. The enzyme catalyses malonyl-[ACP] + acetyl-CoA + H(+) = 3-oxobutanoyl-[ACP] + CO2 + CoA. The protein operates within lipid metabolism; fatty acid biosynthesis. Its function is as follows. Catalyzes the condensation reaction of fatty acid synthesis by the addition to an acyl acceptor of two carbons from malonyl-ACP. Catalyzes the first condensation reaction which initiates fatty acid synthesis and may therefore play a role in governing the total rate of fatty acid production. Possesses both acetoacetyl-ACP synthase and acetyl transacylase activities. Its substrate specificity determines the biosynthesis of branched-chain and/or straight-chain of fatty acids. This chain is Beta-ketoacyl-[acyl-carrier-protein] synthase III, found in Clostridium perfringens (strain SM101 / Type A).